The primary structure comprises 119 residues: Large ribosomal subunit protein uL18 (119 aa).

Belongs to the universal ribosomal protein uL18 family. As to quaternary structure, part of the 50S ribosomal subunit; part of the 5S rRNA/L5/L18/L25 subcomplex. Contacts the 5S and 23S rRNAs.

This is one of the proteins that bind and probably mediate the attachment of the 5S RNA into the large ribosomal subunit, where it forms part of the central protuberance. The protein is Large ribosomal subunit protein uL18 of Desulfovibrio desulfuricans (strain ATCC 27774 / DSM 6949 / MB).